Consider the following 450-residue polypeptide: UDP-N-acetylmuramoylalanine--D-glutamate ligase (450 aa).

119 to 125 (GSNGKTT) contacts ATP.

This sequence belongs to the MurCDEF family.

It is found in the cytoplasm. It carries out the reaction UDP-N-acetyl-alpha-D-muramoyl-L-alanine + D-glutamate + ATP = UDP-N-acetyl-alpha-D-muramoyl-L-alanyl-D-glutamate + ADP + phosphate + H(+). The protein operates within cell wall biogenesis; peptidoglycan biosynthesis. In terms of biological role, cell wall formation. Catalyzes the addition of glutamate to the nucleotide precursor UDP-N-acetylmuramoyl-L-alanine (UMA). This chain is UDP-N-acetylmuramoylalanine--D-glutamate ligase, found in Bacillus cereus (strain G9842).